The sequence spans 424 residues: Tyrosine--tRNA ligase (424 aa).

Tyr-37 contacts L-tyrosine. Residues 42–51 carry the 'HIGH' region motif; that stretch reads PTADSLHLGH. Lys-144 carries the post-translational modification N6-acetyllysine. The L-tyrosine site is built by Tyr-175 and Gln-179. The short motif at 235–239 is the 'KMSKS' region element; sequence KFGKT. Position 238 (Lys-238) interacts with ATP. Residues 357 to 414 form the S4 RNA-binding domain; that stretch reads ADLMQALVDSELQPSRGQARKTIASNAITINGEKQSDPEYFFKEEDRLFGRFTLLRRG.

The protein belongs to the class-I aminoacyl-tRNA synthetase family. TyrS type 1 subfamily. As to quaternary structure, homodimer.

The protein resides in the cytoplasm. The enzyme catalyses tRNA(Tyr) + L-tyrosine + ATP = L-tyrosyl-tRNA(Tyr) + AMP + diphosphate + H(+). Catalyzes the attachment of tyrosine to tRNA(Tyr) in a two-step reaction: tyrosine is first activated by ATP to form Tyr-AMP and then transferred to the acceptor end of tRNA(Tyr). The chain is Tyrosine--tRNA ligase from Shigella dysenteriae serotype 1 (strain Sd197).